The sequence spans 374 residues: uncharacterized protein (374 aa).

A disordered region spans residues 197-223 (GTTTTTNNNNNNNNNNNNNNNNGTNIT). The segment covering 198-223 (TTTTTNNNNNNNNNNNNNNNNGTNIT) has biased composition (low complexity). Residues 302–342 (DEVSDCNDINTNLKKKRKQQEQLQIEKEKKLLTIQQEQTKI) adopt a coiled-coil conformation.

This is an uncharacterized protein from Dictyostelium discoideum (Social amoeba).